Here is a 218-residue protein sequence, read N- to C-terminus: Capsid protein (218 aa).

At methionine 1 the chain carries N-acetylmethionine; by host. Residues 1-10 (MDKSESTSAG) show a composition bias toward low complexity. A disordered region spans residues 1-30 (MDKSESTSAGRNRRRRPRRGSRSASSSSDA). Residues 11–21 (RNRRRRPRRGS) show a composition bias toward basic residues.

Belongs to the cucumovirus capsid protein family.

It is found in the virion. Its function is as follows. Capsid protein. Probably binds RNA and plays a role in packaging. The chain is Capsid protein from Cucumis sativus (Cucumber).